A 99-amino-acid chain; its full sequence is Malonate decarboxylase acyl carrier protein (99 aa).

An O-(phosphoribosyl dephospho-coenzyme A)serine modification is found at S25.

The protein belongs to the MdcC family. Covalently binds the prosthetic group of malonate decarboxylase.

It is found in the cytoplasm. Functionally, subunit of malonate decarboxylase, it is an acyl carrier protein to which acetyl and malonyl thioester residues are bound via a 2'-(5''-phosphoribosyl)-3'-dephospho-CoA prosthetic group and turn over during the catalytic mechanism. In Pseudomonas fluorescens (strain SBW25), this protein is Malonate decarboxylase acyl carrier protein.